The chain runs to 205 residues: LIM domain-containing protein PLIM2b (205 aa).

2 LIM zinc-binding domains span residues 8–68 and 102–162; these read DKCN…LFKE and DKCA…LFME. A disordered region spans residues 177–205; the sequence is RTASGNTLPPEPTEDVAVEAKEENGVSES. The span at 194 to 205 shows a compositional bias: basic and acidic residues; it reads VEAKEENGVSES.

In terms of assembly, interacts with F-actin. Predominantly expressed in flowers and in pollen grains. Detected in vasculature and roots.

The protein localises to the cytoplasm. It is found in the cytoskeleton. Binds to actin filaments and promotes cross-linking into thick bundles. Has an actin-stabilizing activity. The actin regulatory activities are inhibited by pH &gt; 6.8 but are [Ca(2+)] independent. The protein is LIM domain-containing protein PLIM2b of Arabidopsis thaliana (Mouse-ear cress).